We begin with the raw amino-acid sequence, 289 residues long: Ribosomal RNA small subunit methyltransferase A (289 aa).

Residues Asn-28, Leu-30, Gly-55, Glu-76, Asp-101, and Asn-125 each contribute to the S-adenosyl-L-methionine site.

The protein belongs to the class I-like SAM-binding methyltransferase superfamily. rRNA adenine N(6)-methyltransferase family. RsmA subfamily.

The protein localises to the cytoplasm. It catalyses the reaction adenosine(1518)/adenosine(1519) in 16S rRNA + 4 S-adenosyl-L-methionine = N(6)-dimethyladenosine(1518)/N(6)-dimethyladenosine(1519) in 16S rRNA + 4 S-adenosyl-L-homocysteine + 4 H(+). In terms of biological role, specifically dimethylates two adjacent adenosines (A1518 and A1519) in the loop of a conserved hairpin near the 3'-end of 16S rRNA in the 30S particle. May play a critical role in biogenesis of 30S subunits. In Clostridioides difficile (strain 630) (Peptoclostridium difficile), this protein is Ribosomal RNA small subunit methyltransferase A.